A 117-amino-acid polypeptide reads, in one-letter code: Immunoglobulin heavy variable 1-3 (117 aa).

A signal peptide spans 1–19; it reads MDWTWRILFLVAAATGAHS. Residues 20 to 44 are framework-1; that stretch reads QVQLVQSGAEVKKPGASVKVSCKAS. The 98-residue stretch at 20–117 folds into the Ig-like domain; sequence QVQLVQSGAE…EDTAVYYCAR (98 aa). The cysteines at positions 41 and 115 are disulfide-linked. The segment at 45 to 52 is complementarity-determining-1; that stretch reads GYTFTSYA. Residues 53-69 are framework-2; the sequence is MHWVRQAPGQRLEWMGW. The complementarity-determining-2 stretch occupies residues 70 to 77; it reads INAGNGNT. Positions 78–115 are framework-3; the sequence is KYSQKFQGRVTITRDTSASTAYMELSSLRSEDTAVYYC. Residues 116 to 117 form a complementarity-determining-3 region; it reads AR.

In terms of assembly, immunoglobulins are composed of two identical heavy chains and two identical light chains; disulfide-linked.

The protein localises to the secreted. The protein resides in the cell membrane. V region of the variable domain of immunoglobulin heavy chains that participates in the antigen recognition. Immunoglobulins, also known as antibodies, are membrane-bound or secreted glycoproteins produced by B lymphocytes. In the recognition phase of humoral immunity, the membrane-bound immunoglobulins serve as receptors which, upon binding of a specific antigen, trigger the clonal expansion and differentiation of B lymphocytes into immunoglobulins-secreting plasma cells. Secreted immunoglobulins mediate the effector phase of humoral immunity, which results in the elimination of bound antigens. The antigen binding site is formed by the variable domain of one heavy chain, together with that of its associated light chain. Thus, each immunoglobulin has two antigen binding sites with remarkable affinity for a particular antigen. The variable domains are assembled by a process called V-(D)-J rearrangement and can then be subjected to somatic hypermutations which, after exposure to antigen and selection, allow affinity maturation for a particular antigen. The protein is Immunoglobulin heavy variable 1-3 of Homo sapiens (Human).